Here is a 332-residue protein sequence, read N- to C-terminus: Methionine import ATP-binding protein MetN (332 aa).

The ABC transporter domain occupies 2 to 241; the sequence is IELKGLTKVF…PGSRLRELFY (240 aa). 38-45 contributes to the ATP binding site; that stretch reads GQSGAGKS.

The protein belongs to the ABC transporter superfamily. Methionine importer (TC 3.A.1.24) family. In terms of assembly, the complex is composed of two ATP-binding proteins (MetN), two transmembrane proteins (MetI) and a solute-binding protein (MetQ).

It localises to the cell membrane. It catalyses the reaction L-methionine(out) + ATP + H2O = L-methionine(in) + ADP + phosphate + H(+). The enzyme catalyses D-methionine(out) + ATP + H2O = D-methionine(in) + ADP + phosphate + H(+). Functionally, part of the ABC transporter complex MetNIQ involved in methionine import. Responsible for energy coupling to the transport system. In Symbiobacterium thermophilum (strain DSM 24528 / JCM 14929 / IAM 14863 / T), this protein is Methionine import ATP-binding protein MetN.